The primary structure comprises 80 residues: Dermaseptin-DA3 (80 aa).

An N-terminal signal peptide occupies residues 1–22 (MAFLKKSLFLVLFLGLVSLSIC). The propeptide occupies 23-42 (EEKRENEDEEEQEDDEQSEE). The interval 24-48 (EKRENEDEEEQEDDEQSEEKRGMWS) is disordered. Residues 29–40 (EDEEEQEDDEQS) show a composition bias toward acidic residues. The residue at position 77 (Leu-77) is a Leucine amide. The propeptide occupies 79–80 (EQ).

This sequence belongs to the frog skin active peptide (FSAP) family. Dermaseptin subfamily. Expressed by the skin glands.

The protein localises to the secreted. In terms of biological role, possesses a potent antimicrobial activity against Gram-positive and Gram-negative bacteria. Probably acts by disturbing membrane functions with its amphipathic structure. In Agalychnis dacnicolor (Giant Mexican leaf frog), this protein is Dermaseptin-DA3.